We begin with the raw amino-acid sequence, 1719 residues long: Serine/threonine-protein kinase MRCK alpha (1719 aa).

The region spanning 77 to 343 is the Protein kinase domain; the sequence is FEILKVIGRG…IEDFKKHPFF (267 aa). Residues 83-91 and K106 contribute to the ATP site; that span reads IGRGAFGEV. D201 serves as the catalytic Proton acceptor. S222 and S234 each carry phosphoserine; by autocatalysis. T240 bears the Phosphothreonine; by autocatalysis mark. In terms of domain architecture, AGC-kinase C-terminal spans 344–414; sequence SGIDWDNIRN…TSSCVLSDRS (71 aa). Coiled-coil stretches lie at residues 437-670, 713-820, and 880-943; these read NNLA…KQKQ, SEIK…WEAQ, and LELQ…SEKG. The segment at 999–1049 adopts a Phorbol-ester/DAG-type zinc-finger fold; the sequence is THQFFVKSFTAPTKCHQCTSLMVGLIRQGCSCEVCGFSCHITCVNKAPTVC. In terms of domain architecture, PH spans 1069 to 1188; the sequence is GTAYEGHVRI…WVGVLSELHK (120 aa). A CNH domain is found at 1214 to 1486; sequence IKTTQAAAII…RPLNTEGSLN (273 aa). The residue at position 1532 (S1532) is a Phosphoserine. The CRIB domain maps to 1558–1571; it reads ISNPTNFNHIAHMG. The interval 1579 to 1719 is disordered; sequence LKDLPMNPRP…ESTDRGSWDP (141 aa). Polar residues predominate over residues 1591–1606; it reads SRTVFSGSVSIPSITK. S1598, S1600, S1616, S1638, S1651, S1656, S1680, S1706, and S1708 each carry phosphoserine. The span at 1612-1627 shows a compositional bias: low complexity; that stretch reads GRSMSASSGLSARSSA. A compositionally biased stretch (low complexity) spans 1652–1661; it reads PSEGSLSSGG.

The protein belongs to the protein kinase superfamily. AGC Ser/Thr protein kinase family. DMPK subfamily. Homodimer and homotetramer via the coiled coil regions. Interacts tightly with GTP-bound but not GDP-bound CDC42. Forms a tripartite complex with MYO18A and LRP35A with the latter acting as an adapter connecting CDC42BPA and MYO18A. LRP35A binding results in activation of CDC42BPA by abolition of its negative autoregulation. Interacts with LURAP1. Interacts (via AGC-kinase C-terminal domain) with FAM89B/LRAP25 (via LRR repeat). Forms a tripartite complex with FAM89B/LRAP25 and LIMK1. It depends on Mg(2+) as a cofactor. Proteolytically cleaved by caspases upon apoptosis induction. The cleavage at Asp-478 by CASP3 increases its kinase activity (in vitro).

The protein localises to the cytoplasm. It localises to the cell projection. It is found in the lamellipodium. It catalyses the reaction L-seryl-[protein] + ATP = O-phospho-L-seryl-[protein] + ADP + H(+). The enzyme catalyses L-threonyl-[protein] + ATP = O-phospho-L-threonyl-[protein] + ADP + H(+). Its activity is regulated as follows. Maintained in an inactive, closed conformation by an interaction between the kinase domain and the negative autoregulatory C-terminal coiled-coil region. Agonist binding to the phorbol ester binding site disrupts this, releasing the kinase domain to allow N-terminus-mediated dimerization and kinase activation by transautophosphorylation. Inhibited by chelerythrine chloride. In terms of biological role, serine/threonine-protein kinase which is an important downstream effector of CDC42 and plays a role in the regulation of cytoskeleton reorganization and cell migration. Regulates actin cytoskeletal reorganization via phosphorylation of PPP1R12C and MYL9/MLC2. In concert with MYO18A and LRP35A, is involved in modulating lamellar actomyosin retrograde flow that is crucial to cell protrusion and migration. Phosphorylates: PPP1R12A and LIMK2. May play a role in TFRC-mediated iron uptake. In concert with FAM89B/LRAP25 mediates the targeting of LIMK1 to the lamellipodium resulting in its activation and subsequent phosphorylation of CFL1 which is important for lamellipodial F-actin regulation. Triggers the formation of an extrusion apical actin ring required for epithelial extrusion of apoptotic cells. This chain is Serine/threonine-protein kinase MRCK alpha (Cdc42bpa), found in Mus musculus (Mouse).